A 336-amino-acid chain; its full sequence is Atypical chemokine receptor 1 (336 aa).

The Extracellular portion of the chain corresponds to 1–63 (MGNCLHQAEL…CNLLDDSSLP (63 aa)). Asn16 and Asn33 each carry an N-linked (GlcNAc...) asparagine glycan. 2 disulfide bridges follow: Cys51/Cys276 and Cys129/Cys195. The chain crosses the membrane as a helical span at residues 64–84 (FFILASVLGILASSTVLFMLF). Topologically, residues 85-95 (RPLFRWQLCPG) are cytoplasmic. The chain crosses the membrane as a helical span at residues 96-116 (WPVLAQLAVGSALFSIVVPIL). Residues 117 to 129 (APGLGNTRSSALC) are Extracellular-facing. A helical transmembrane segment spans residues 130–153 (SLGYCVWYGSAFAQALLLGCHASL). Residues 154 to 166 (GPKLGAGQVPGLT) lie on the Cytoplasmic side of the membrane. A helical membrane pass occupies residues 167–187 (LGLTVGLWGAAALLTVPITLA). The Extracellular portion of the chain corresponds to 188 to 207 (SGASDGLCTPIYSTELKALQ). A helical membrane pass occupies residues 208–228 (ATHTVACFAIFVLLPLGLFGA). Topologically, residues 229–244 (KGVKKALGMGPGPWMT) are cytoplasmic. Residues 245–265 (ILWIWFIFWWPHGVVLGLDFL) form a helical membrane-spanning segment. Over 266-287 (VRSKLLLLPTCLAQQVLDLLLN) the chain is Extracellular. A helical membrane pass occupies residues 288–308 (LAEALTIVHCVATPLLLALFC). Topologically, residues 309 to 336 (HQATRTLLPSLPLPERWSSPVDTLGSKS) are cytoplasmic.

The protein belongs to the G-protein coupled receptor 1 family. Atypical chemokine receptor subfamily.

The protein resides in the early endosome. Its subcellular location is the recycling endosome. The protein localises to the membrane. In terms of biological role, atypical chemokine receptor that controls chemokine levels and localization via high-affinity chemokine binding that is uncoupled from classic ligand-driven signal transduction cascades, resulting instead in chemokine sequestration, degradation, or transcytosis. Also known as interceptor (internalizing receptor) or chemokine-scavenging receptor or chemokine decoy receptor. Has a promiscuous chemokine-binding profile, interacting with inflammatory chemokines of both the CXC and the CC subfamilies but not with homeostatic chemokines. Acts as a receptor for chemokines including CCL2, CCL5, CCL7, CCL11, CCL13, CCL14, CCL17, CXCL5, CXCL6, IL8/CXCL8, CXCL11, GRO, RANTES, MCP-1 and TARC. May regulate chemokine bioavailability and, consequently, leukocyte recruitment through two distinct mechanisms: when expressed in endothelial cells, it sustains the abluminal to luminal transcytosis of tissue-derived chemokines and their subsequent presentation to circulating leukocytes; when expressed in erythrocytes, serves as blood reservoir of cognate chemokines but also as a chemokine sink, buffering potential surges in plasma chemokine levels. The sequence is that of Atypical chemokine receptor 1 (ACKR1) from Sapajus apella (Brown-capped capuchin).